The sequence spans 385 residues: Serpin-Z1 (385 aa).

The interval 317–341 (GAEAAAATADGDCGCSLDFVEPPKK) is RCL.

This sequence belongs to the serpin family.

Functionally, probable serine protease inhibitor. The protein is Serpin-Z1 of Arabidopsis thaliana (Mouse-ear cress).